We begin with the raw amino-acid sequence, 188 residues long: E3 ubiquitin-protein ligase RNF183 (188 aa).

Residues 1 to 157 (MAEQQGREPE…RECFRNPHFR (157 aa)) are Cytoplasmic-facing. An RING-type zinc finger spans residues 11 to 58 (CPVCWNPFNNTFHTPKVLDCCHSFCVECLAHISLVTPTRRRLLCPLCR). A helical; Anchor for type IV membrane protein membrane pass occupies residues 158 to 178 (IFAYMMAVILCGTVLFIFSIF). At 179-188 (CTRRFFWGVG) the chain is on the lumenal side.

In terms of assembly, interacts with FATE1. Interacts with SEC16A. Interacts with BCL2L1. In terms of processing, autoubiquitinated (in vitro).

The protein resides in the endoplasmic reticulum membrane. It is found in the endoplasmic reticulum. It localises to the golgi apparatus. Its subcellular location is the cis-Golgi network membrane. The protein localises to the lysosome. The catalysed reaction is S-ubiquitinyl-[E2 ubiquitin-conjugating enzyme]-L-cysteine + [acceptor protein]-L-lysine = [E2 ubiquitin-conjugating enzyme]-L-cysteine + N(6)-ubiquitinyl-[acceptor protein]-L-lysine.. It participates in protein modification; protein ubiquitination. Its function is as follows. Acts as an E3 ubiquitin ligase catalyzing the covalent attachment of ubiquitin moieties onto substrate proteins. Triggers apoptosis in response to prolonged ER stress by mediating the polyubiquitination and subsequent proteasomal degradation of BCL2L1. May collaborate with FATE1 to restrain BIK protein levels thus regulating apoptotic signaling. The chain is E3 ubiquitin-protein ligase RNF183 (RNF183) from Bos taurus (Bovine).